The chain runs to 264 residues: Putative ankyrin repeat domain-containing protein 19 (264 aa).

ANK repeat units follow at residues 67 to 96 (KDRTVLHLTCAHGRVEVVTLLLSRRCQINI), 100 to 129 (LNRTPLMKAVHCQEEACAIILLEHGANPNI), 133 to 162 (YSNTALHYAVYNKGTSLAEKLLSHHANIEA), 166 to 195 (EGNTPLLFAINSRRQQIVEFLLKNQANLHA), and 199 to 228 (FRRTALMLAVQHNSSSIVSLLLQQNINIFS).

The polypeptide is Putative ankyrin repeat domain-containing protein 19 (ANKRD19P) (Homo sapiens (Human)).